Reading from the N-terminus, the 198-residue chain is Ribonuclease HII (198 aa).

The RNase H type-2 domain maps to 10–198; that stretch reads QLVAGVDEVG…PVKRALGLAS (189 aa). Asp-16, Glu-17, and Asp-108 together coordinate a divalent metal cation.

This sequence belongs to the RNase HII family. Mn(2+) serves as cofactor. Mg(2+) is required as a cofactor.

It localises to the cytoplasm. The catalysed reaction is Endonucleolytic cleavage to 5'-phosphomonoester.. Endonuclease that specifically degrades the RNA of RNA-DNA hybrids. The protein is Ribonuclease HII of Escherichia coli O45:K1 (strain S88 / ExPEC).